A 348-amino-acid chain; its full sequence is Rhodopsin (348 aa).

The Extracellular segment spans residues 1–33 (TEGPYFYIPMVNTTGIVRSPYEYPQYYLVNPAA). A glycan (N-linked (GlcNAc...) asparagine) is linked at Asn12. A helical transmembrane segment spans residues 34 to 58 (YAMLGAYMFFLIIVGFPVNFMTLYV). At 59 to 70 (TLEHKKLRTPLN) the chain is on the cytoplasmic side. Residues 71-93 (YILLNLAVADLFMVIGGFTTTIY) form a helical membrane-spanning segment. Residues 94 to 107 (TSMHGYFVLGRLGC) lie on the Extracellular side of the membrane. Cys107 and Cys184 form a disulfide bridge. The helical transmembrane segment at 108-130 (NIEGFFATLGGMISLWSLAVLAI) threads the bilayer. Positions 131–133 (ERW) match the 'Ionic lock' involved in activated form stabilization motif. The Cytoplasmic segment spans residues 131–149 (ERWVVVCKPISNFRFGENH). Residues 150–170 (AIMGVSLTWAMALACTVPPLV) traverse the membrane as a helical segment. Topologically, residues 171-199 (GWSRYIPEGMQCSCGIDYYTRAEGFNNES) are extracellular. N-linked (GlcNAc...) asparagine glycosylation occurs at Asn197. The chain crosses the membrane as a helical span at residues 200–221 (FVLYMFFCHFTIPLTIIFFCYG). The Cytoplasmic portion of the chain corresponds to 222 to 249 (RLLCAVKEAAAAQQESETTQRAEREVTR). A helical transmembrane segment spans residues 250–271 (MVIIMVIGFLICWLPYASVAWF). Over 272-283 (IFTHQGSEFGPL) the chain is Extracellular. A helical membrane pass occupies residues 284–305 (FMTIPAFFAKSSSIYNPMIYIC). Position 293 is an N6-(retinylidene)lysine (Lys293). Over 306-348 (MNKQFRHCMITTLFCGKNPFEGEEEGASSTKTEASSASSVSPA) the chain is Cytoplasmic. Residue Cys320 is the site of S-palmitoyl cysteine attachment. The interval 327–348 (GEEEGASSTKTEASSASSVSPA) is disordered. The span at 332–348 (ASSTKTEASSASSVSPA) shows a compositional bias: low complexity.

Belongs to the G-protein coupled receptor 1 family. Opsin subfamily. Phosphorylated on some or all of the serine and threonine residues present in the C-terminal region. Post-translationally, contains one covalently linked retinal chromophore.

Its subcellular location is the membrane. The protein localises to the cell projection. It is found in the cilium. It localises to the photoreceptor outer segment. Functionally, photoreceptor required for image-forming vision at low light intensity. While most salt water fish species use retinal as chromophore, most freshwater fish use 3-dehydroretinal, or a mixture of retinal and 3-dehydroretinal. Light-induced isomerization of 11-cis to all-trans retinal triggers a conformational change that activates signaling via G-proteins. Subsequent receptor phosphorylation mediates displacement of the bound G-protein alpha subunit by arrestin and terminates signaling. This chain is Rhodopsin (rho), found in Sargocentron microstoma (Smallmouth squirrelfish).